A 398-amino-acid chain; its full sequence is Elongation factor Tu (398 aa).

Residues 10 to 207 enclose the tr-type G domain; that stretch reads KPHVNIGTIG…TVDEYIPEPE (198 aa). Residues 19–26 form a G1 region; that stretch reads GHVDHGKT. A GTP-binding site is contributed by 19 to 26; sequence GHVDHGKT. Thr-26 is a Mg(2+) binding site. Residues 63–67 are G2; the sequence is GITIN. The G3 stretch occupies residues 84 to 87; it reads DAPG. Residues 84-88 and 139-142 each bind GTP; these read DAPGH and NKVD. Positions 139–142 are G4; the sequence is NKVD. The segment at 177–179 is G5; the sequence is SAL.

The protein belongs to the TRAFAC class translation factor GTPase superfamily. Classic translation factor GTPase family. EF-Tu/EF-1A subfamily. As to quaternary structure, monomer.

The protein resides in the cytoplasm. The enzyme catalyses GTP + H2O = GDP + phosphate + H(+). Its function is as follows. GTP hydrolase that promotes the GTP-dependent binding of aminoacyl-tRNA to the A-site of ribosomes during protein biosynthesis. This chain is Elongation factor Tu, found in Streptococcus thermophilus (strain CNRZ 1066).